A 195-amino-acid polypeptide reads, in one-letter code: A-type ATP synthase subunit E (195 aa).

It belongs to the V-ATPase E subunit family. In terms of assembly, has multiple subunits with at least A(3), B(3), C, D, E, F, H, I and proteolipid K(x).

The protein resides in the cell membrane. In terms of biological role, component of the A-type ATP synthase that produces ATP from ADP in the presence of a proton gradient across the membrane. The chain is A-type ATP synthase subunit E from Halobacterium salinarum (strain ATCC 29341 / DSM 671 / R1).